We begin with the raw amino-acid sequence, 119 residues long: MKKVKEAEKRNIKRKKRIRDRIGFGVADRPRVTVFKSNKYFYVQVIDDMAGHTLASVSTIEKDLKLNKNIDDVKKLGEVLAKRLKDKNISRLIFDRNGYKYHGLIASFATSLREAGIDV.

This sequence belongs to the universal ribosomal protein uL18 family. Part of the 50S ribosomal subunit; part of the 5S rRNA/L5/L18/L25 subcomplex. Contacts the 5S and 23S rRNAs.

This is one of the proteins that bind and probably mediate the attachment of the 5S RNA into the large ribosomal subunit, where it forms part of the central protuberance. This Borrelia hermsii (strain HS1 / DAH) protein is Large ribosomal subunit protein uL18.